The following is a 164-amino-acid chain: Elicitin-like protein 2 (164 aa).

The N-terminal stretch at 1–22 (MFSKTLVVLAAVAAVTVNGLTA) is a signal peptide. Disulfide bonds link Cys25/Cys91, Cys47/Cys76, and Cys71/Cys118. The segment at 121-164 (ISGGGSTPTTAPPSGTTPTTPTTAPPTGTTPGVTPSPTTPKPAC) is disordered. The span at 127–156 (TPTTAPPSGTTPTTPTTAPPTGTTPGVTPS) shows a compositional bias: low complexity.

It belongs to the elicitin family.

It localises to the secreted. Induces local and distal defense responses (incompatible hypersensitive reaction) in plants from the solanaceae and cruciferae families. Elicits leaf necrosis and causes the accumulation of pathogenesis-related proteins. Might interact with the lipidic molecules of the plasma membrane. The sequence is that of Elicitin-like protein 2 (POD-2) from Pythium oligandrum (Mycoparasitic fungus).